Consider the following 547-residue polypeptide: Inositol 1,4,5-trisphosphate receptor-interacting protein-like 1 (547 aa).

Positions 1–16 (MAVISLLFLAVMYVVH) are cleaved as a signal peptide. Over 17–96 (HPLMVSDRMD…PFQASGQDGG (80 aa)) the chain is Extracellular. Residues 28 to 66 (DTLARSRQLEKRMSEEMRQLEIEFEERSRAAEEKQKAEN) adopt a coiled-coil conformation. A helical transmembrane segment spans residues 97–117 (PLGWMLGNLWNAGLFCLFLIF). Residues 118–547 (ELLRQNMQHE…LPCSPLAGGL (430 aa)) lie on the Cytoplasmic side of the membrane.

This sequence belongs to the ITPRIP family.

It localises to the cell membrane. Its function is as follows. Functions as a ligand of CD3E, inhibiting TCR-CD3 complex signaling to regulate T cell activation. Induces stable CD3E-NCK1 binding, thereby preventing the CD3E-ZAP70 interaction and subsequently inhibiting the activation of the downstream ERK-NFkB signaling cascade and calcium influx. In Rattus norvegicus (Rat), this protein is Inositol 1,4,5-trisphosphate receptor-interacting protein-like 1 (Itpripl1).